Reading from the N-terminus, the 947-residue chain is Regulator of spindle assembly protein 2 (947 aa).

Disordered stretches follow at residues 20 to 148 and 173 to 211; these read EKPA…LSEQ and SPHE…LKPR. Composition is skewed to basic and acidic residues over residues 30 to 50 and 62 to 84; these read PKYR…EGEK and TRED…DLRI. Polar residues-rich tracts occupy residues 90–102 and 179–188; these read SATP…SDQY and QQTIQESSEQ. Positions 276 to 320 form a coiled coil; the sequence is IIAEEAKKRRNEAEAVRKLIEVETQNAKKRAVIQELKDRIDKLTQ. Disordered stretches follow at residues 407-453, 575-594, 600-662, and 681-705; these read KINP…RRIG, ERES…LEIP, SVTT…GLII, and EQSL…FLLD. Low complexity predominate over residues 411–422; sequence SSQLNQQSSSDA. Over residues 430-449 the composition is skewed to polar residues; that stretch reads EASTQMTSRLAESAMTQTSP. A coiled-coil region spans residues 563–591; it reads AGLSHYLEQVKKERESMEAQESESESMEL. Positions 580–590 are enriched in acidic residues; it reads EAQESESESME. Basic and acidic residues predominate over residues 645–657; the sequence is FEHEIEEHKEPEK.

As to quaternary structure, interacts with phosphatase regulatory subunit rsa-1 and tpxl-1. May interact with spd-5. May interact with sys-1.

Its subcellular location is the cytoplasm. It is found in the cytoskeleton. The protein localises to the microtubule organizing center. The protein resides in the centrosome. In terms of biological role, recruits rsa-1 and, thereby, phosphatase let-92/paa-1 complex to the centrosomes. Recruits sys-1/beta-catenin to mitotic centrosomes during the first embryonic cell divisions. The sequence is that of Regulator of spindle assembly protein 2 from Caenorhabditis elegans.